Consider the following 492-residue polypeptide: Xaa-Pro dipeptidase (492 aa).

Ala2 is subject to N-acetylalanine. Ser167 bears the Phosphoserine mark. His255 is a binding site for a dipeptide. 3 residues coordinate Mn(2+): Asp276, Asp287, and His370. Asp287 provides a ligand contact to a dipeptide. The a dipeptide site is built by His377 and Arg398. Mn(2+) is bound by residues Glu412 and Glu452.

It belongs to the peptidase M24B family. Eukaryotic-type prolidase subfamily. In terms of assembly, homodimer. It depends on Mn(2+) as a cofactor.

The catalysed reaction is Xaa-L-Pro dipeptide + H2O = an L-alpha-amino acid + L-proline. Dipeptidase that catalyzes the hydrolysis of dipeptides with a prolyl (Xaa-Pro) or hydroxyprolyl residue in the C-terminal position. The preferred dipeptide substrate is Gly-Pro, but other Xaa-Pro dipeptides, such as Ala-Pro, Met-Pro, Phe-Pro, Val-Pro and Leu-Pro, can be cleaved. Plays an important role in collagen metabolism because the high level of iminoacids in collagen. This is Xaa-Pro dipeptidase (Pepd) from Rattus norvegicus (Rat).